The following is an 879-amino-acid chain: Pyruvate dehydrogenase phosphatase regulatory subunit, mitochondrial (879 aa).

The transit peptide at 1–27 (MMFYRLLSIVGRQRASPGWQNWSSARN) directs the protein to the mitochondrion.

It belongs to the GcvT family. Heterodimer of a catalytic (PDP1) and a regulatory (PDPR) subunit.

The protein resides in the mitochondrion matrix. In terms of biological role, decreases the sensitivity of PDP1 to magnesium ions, and this inhibition is reversed by the polyamine spermine. This chain is Pyruvate dehydrogenase phosphatase regulatory subunit, mitochondrial (PDPR), found in Homo sapiens (Human).